Here is a 165-residue protein sequence, read N- to C-terminus: 6,7-dimethyl-8-ribityllumazine synthase (165 aa).

5-amino-6-(D-ribitylamino)uracil contacts are provided by residues Phe-22, 56–58, and 80–82; these read SME and AVI. (2S)-2-hydroxy-3-oxobutyl phosphate is bound at residue 85–86; the sequence is ET. The active-site Proton donor is the His-88. Phe-113 contributes to the 5-amino-6-(D-ribitylamino)uracil binding site. Position 127 (Arg-127) interacts with (2S)-2-hydroxy-3-oxobutyl phosphate.

It belongs to the DMRL synthase family.

The enzyme catalyses (2S)-2-hydroxy-3-oxobutyl phosphate + 5-amino-6-(D-ribitylamino)uracil = 6,7-dimethyl-8-(1-D-ribityl)lumazine + phosphate + 2 H2O + H(+). The protein operates within cofactor biosynthesis; riboflavin biosynthesis; riboflavin from 2-hydroxy-3-oxobutyl phosphate and 5-amino-6-(D-ribitylamino)uracil: step 1/2. Its function is as follows. Catalyzes the formation of 6,7-dimethyl-8-ribityllumazine by condensation of 5-amino-6-(D-ribitylamino)uracil with 3,4-dihydroxy-2-butanone 4-phosphate. This is the penultimate step in the biosynthesis of riboflavin. The polypeptide is 6,7-dimethyl-8-ribityllumazine synthase (Thermotoga sp. (strain RQ2)).